An 87-amino-acid chain; its full sequence is Small ribosomal subunit protein bS20 (87 aa).

Positions 1 to 12 (MANHKSALKRNR) are enriched in basic residues. Positions 1-21 (MANHKSALKRNRQAAVRNARN) are disordered.

It belongs to the bacterial ribosomal protein bS20 family.

In terms of biological role, binds directly to 16S ribosomal RNA. The sequence is that of Small ribosomal subunit protein bS20 from Syntrophotalea carbinolica (strain DSM 2380 / NBRC 103641 / GraBd1) (Pelobacter carbinolicus).